A 145-amino-acid polypeptide reads, in one-letter code: Large ribosomal subunit protein uL11 (145 aa).

It belongs to the universal ribosomal protein uL11 family. Part of the ribosomal stalk of the 50S ribosomal subunit. Interacts with L10 and the large rRNA to form the base of the stalk. L10 forms an elongated spine to which L12 dimers bind in a sequential fashion forming a multimeric L10(L12)X complex. Post-translationally, one or more lysine residues are methylated.

Functionally, forms part of the ribosomal stalk which helps the ribosome interact with GTP-bound translation factors. This Rickettsia massiliae (strain Mtu5) protein is Large ribosomal subunit protein uL11.